A 329-amino-acid polypeptide reads, in one-letter code: Phosphate acyltransferase (329 aa).

Belongs to the PlsX family. In terms of assembly, homodimer. Probably interacts with PlsY.

It is found in the cytoplasm. It carries out the reaction a fatty acyl-[ACP] + phosphate = an acyl phosphate + holo-[ACP]. The protein operates within lipid metabolism; phospholipid metabolism. In terms of biological role, catalyzes the reversible formation of acyl-phosphate (acyl-PO(4)) from acyl-[acyl-carrier-protein] (acyl-ACP). This enzyme utilizes acyl-ACP as fatty acyl donor, but not acyl-CoA. The protein is Phosphate acyltransferase of Exiguobacterium sp. (strain ATCC BAA-1283 / AT1b).